The primary structure comprises 88 residues: Small ribosomal subunit protein bS20 (88 aa).

The tract at residues 1–20 (MANIKQQKKRNKTNEKRRLR) is disordered.

The protein belongs to the bacterial ribosomal protein bS20 family.

In terms of biological role, binds directly to 16S ribosomal RNA. This is Small ribosomal subunit protein bS20 from Phytoplasma australiense.